Reading from the N-terminus, the 97-residue chain is Prophage lipoprotein Bor homolog (97 aa).

Residues 1 to 16 (MKKMLLATALALLITG) form the signal peptide. A lipid anchor (N-palmitoyl cysteine) is attached at Cys17. Cys17 carries S-diacylglycerol cysteine lipidation.

It belongs to the lambda phage bor family.

The protein localises to the cell membrane. This chain is Prophage lipoprotein Bor homolog (borD), found in Escherichia coli (strain K12).